A 119-amino-acid chain; its full sequence is Large ribosomal subunit protein bL20 (119 aa).

This sequence belongs to the bacterial ribosomal protein bL20 family.

Binds directly to 23S ribosomal RNA and is necessary for the in vitro assembly process of the 50S ribosomal subunit. It is not involved in the protein synthesizing functions of that subunit. The protein is Large ribosomal subunit protein bL20 of Acinetobacter baylyi (strain ATCC 33305 / BD413 / ADP1).